The following is a 539-amino-acid chain: Tyrosinase (539 aa).

Residues His-63, His-84, His-93, His-290, His-294, and His-333 each contribute to the Cu cation site. Positions 82 to 84 (CHH) form a cross-link, 2'-(S-cysteinyl)-histidine (Cys-His).

Belongs to the tyrosinase family. As to quaternary structure, homotetramer. Cu(2+) is required as a cofactor. The N-terminus is blocked.

It carries out the reaction 2 L-dopa + O2 = 2 L-dopaquinone + 2 H2O. The enzyme catalyses L-tyrosine + O2 = L-dopaquinone + H2O. With respect to regulation, activated by acidifying treatment at pH 3.0. In terms of biological role, this is a copper-containing oxidase that functions in the formation of pigments such as melanins and other polyphenolic compounds. The sequence is that of Tyrosinase (melO) from Aspergillus oryzae (strain ATCC 42149 / RIB 40) (Yellow koji mold).